A 204-amino-acid chain; its full sequence is Small ribosomal subunit protein uS3 (204 aa).

Residues 37 to 105 enclose the KH type-2 domain; the sequence is IRSYINESFK…NVEVNVVGVK (69 aa).

Belongs to the universal ribosomal protein uS3 family. In terms of assembly, part of the 30S ribosomal subunit. Forms a tight complex with proteins S10 and S14.

Its function is as follows. Binds the lower part of the 30S subunit head. Binds mRNA in the 70S ribosome, positioning it for translation. The polypeptide is Small ribosomal subunit protein uS3 (Wolbachia pipientis wMel).